The chain runs to 313 residues: Porphobilinogen deaminase (313 aa).

Cysteine 242 carries the post-translational modification S-(dipyrrolylmethanemethyl)cysteine.

It belongs to the HMBS family. Monomer. Dipyrromethane serves as cofactor.

It catalyses the reaction 4 porphobilinogen + H2O = hydroxymethylbilane + 4 NH4(+). Its pathway is porphyrin-containing compound metabolism; protoporphyrin-IX biosynthesis; coproporphyrinogen-III from 5-aminolevulinate: step 2/4. Functionally, tetrapolymerization of the monopyrrole PBG into the hydroxymethylbilane pre-uroporphyrinogen in several discrete steps. The polypeptide is Porphobilinogen deaminase (Pseudomonas putida (strain ATCC 700007 / DSM 6899 / JCM 31910 / BCRC 17059 / LMG 24140 / F1)).